Reading from the N-terminus, the 223-residue chain is Putative UPF0607 protein LOC392364 (223 aa).

The span at 110–138 (KMEVRAEEPKEATEVKDQVETQEQEDNKR) shows a compositional bias: basic and acidic residues. Positions 110 to 223 (KMEVRAEEPK…GRTPPARQHG (114 aa)) are disordered. Composition is skewed to polar residues over residues 145 to 163 (EAAS…TSPR) and 174 to 186 (QLKS…QTDK).

This sequence belongs to the UPF0607 family.

The polypeptide is Putative UPF0607 protein LOC392364 (Homo sapiens (Human)).